A 243-amino-acid polypeptide reads, in one-letter code: tRNA pseudouridine synthase A (243 aa).

D53 functions as the Nucleophile in the catalytic mechanism. Y111 contacts substrate.

It belongs to the tRNA pseudouridine synthase TruA family. Homodimer.

It catalyses the reaction uridine(38/39/40) in tRNA = pseudouridine(38/39/40) in tRNA. Its function is as follows. Formation of pseudouridine at positions 38, 39 and 40 in the anticodon stem and loop of transfer RNAs. The polypeptide is tRNA pseudouridine synthase A (Chlorobium chlorochromatii (strain CaD3)).